The sequence spans 1085 residues: Tudor domain-containing protein 7B (1085 aa).

The HTH OST-type 1 domain occupies 3–76 (DEELVKKMVR…SGEVMCHATT (74 aa)). 3 disordered regions span residues 112 to 183 (APLV…PEKR), 200 to 228 (RNPQ…SAPY), and 297 to 341 (PAKE…KALS). The segment covering 203–216 (QHINVPSNLNENTT) has biased composition (polar residues). In terms of domain architecture, HTH OST-type 2 spans 229 to 299 (SPKLVQSRLQ…PQELLLYPAK (71 aa)). The segment covering 322-335 (TQRPSLTAKSNTPE) has biased composition (polar residues). Positions 340-410 (LSPDLKQKLG…PKRAILYAKV (71 aa)) constitute an HTH OST-type 3 domain. Tudor domains lie at 496–554 (SPSP…FYRL) and 686–743 (RPFC…LLRD). Over residues 843 to 853 (NVPTATQTSSL) the composition is skewed to polar residues. Positions 843–888 (NVPTATQTSSLKTDRGDKALHTPKKTSPPLGSKSTPAGSPPERLSL) are disordered.

It localises to the cytoplasm. Functionally, component of specific cytoplasmic RNA granules involved in post-transcriptional regulation of specific genes: probably acts by binding to specific mRNAs and regulating their translation. Probably required during spermatogenesis. This chain is Tudor domain-containing protein 7B (tdrd7b), found in Danio rerio (Zebrafish).